The chain runs to 200 residues: 3-isopropylmalate dehydratase small subunit (200 aa).

It belongs to the LeuD family. LeuD type 1 subfamily. Heterodimer of LeuC and LeuD.

It carries out the reaction (2R,3S)-3-isopropylmalate = (2S)-2-isopropylmalate. It functions in the pathway amino-acid biosynthesis; L-leucine biosynthesis; L-leucine from 3-methyl-2-oxobutanoate: step 2/4. Functionally, catalyzes the isomerization between 2-isopropylmalate and 3-isopropylmalate, via the formation of 2-isopropylmaleate. The chain is 3-isopropylmalate dehydratase small subunit from Vibrio parahaemolyticus serotype O3:K6 (strain RIMD 2210633).